Reading from the N-terminus, the 265-residue chain is Phosphonates import ATP-binding protein PhnC 1 (265 aa).

The 245-residue stretch at 3–247 folds into the ABC transporter domain; sequence LRLSAIELRH…HLDTLYANEQ (245 aa). 36–43 serves as a coordination point for ATP; sequence GPSGAGKT.

The protein belongs to the ABC transporter superfamily. Phosphonates importer (TC 3.A.1.9.1) family. As to quaternary structure, the complex is composed of two ATP-binding proteins (PhnC), two transmembrane proteins (PhnE) and a solute-binding protein (PhnD).

It localises to the cell inner membrane. The catalysed reaction is phosphonate(out) + ATP + H2O = phosphonate(in) + ADP + phosphate + H(+). Its function is as follows. Part of the ABC transporter complex PhnCDE involved in phosphonates import. Responsible for energy coupling to the transport system. The protein is Phosphonates import ATP-binding protein PhnC 1 of Pseudomonas syringae pv. syringae (strain B728a).